A 216-amino-acid chain; its full sequence is Adenylate kinase (216 aa).

Residue 10–15 coordinates ATP; the sequence is GAGKGT. An NMP region spans residues 30 to 59; that stretch reads STGDMLRAAVKAGTPLGLELKKVMDAGQLV. AMP is bound by residues Thr-31, Arg-36, 57 to 59, 85 to 88, and Gln-92; these read QLV and GFPR. An LID region spans residues 122 to 159; sequence GRRVHLASGRTYHIQYNPPKVEGKDDVTGEDLIQRDDD. Residues Arg-123 and 132-133 contribute to the ATP site; that span reads TY. Residues Arg-156 and Arg-167 each coordinate AMP. Residue Gly-202 participates in ATP binding.

This sequence belongs to the adenylate kinase family. Monomer.

It is found in the cytoplasm. The catalysed reaction is AMP + ATP = 2 ADP. Its pathway is purine metabolism; AMP biosynthesis via salvage pathway; AMP from ADP: step 1/1. In terms of biological role, catalyzes the reversible transfer of the terminal phosphate group between ATP and AMP. Plays an important role in cellular energy homeostasis and in adenine nucleotide metabolism. This chain is Adenylate kinase, found in Pseudomonas putida (strain GB-1).